We begin with the raw amino-acid sequence, 130 residues long: Small ribosomal subunit protein uS9 (130 aa).

This sequence belongs to the universal ribosomal protein uS9 family.

This is Small ribosomal subunit protein uS9 from Vibrio campbellii (strain ATCC BAA-1116).